The chain runs to 791 residues: uncharacterized protein (791 aa).

Residues 267 to 288 are disordered; sequence APGESSAQSSYEQSTRAGDSAP. The segment covering 271 to 283 has biased composition (polar residues); it reads SSAQSSYEQSTRA.

This is an uncharacterized protein from Treponema pallidum (strain Nichols).